The primary structure comprises 284 residues: Pantothenate synthetase (284 aa).

Methionine 30–histidine 37 lines the ATP pocket. Histidine 37 functions as the Proton donor in the catalytic mechanism. Glutamine 61 lines the (R)-pantoate pocket. Glutamine 61 is a binding site for beta-alanine. Residue glycine 149–aspartate 152 coordinates ATP. Glutamine 155 contributes to the (R)-pantoate binding site. ATP-binding positions include valine 178 and leucine 186–arginine 189.

The protein belongs to the pantothenate synthetase family. Homodimer.

The protein localises to the cytoplasm. It catalyses the reaction (R)-pantoate + beta-alanine + ATP = (R)-pantothenate + AMP + diphosphate + H(+). It functions in the pathway cofactor biosynthesis; (R)-pantothenate biosynthesis; (R)-pantothenate from (R)-pantoate and beta-alanine: step 1/1. Its function is as follows. Catalyzes the condensation of pantoate with beta-alanine in an ATP-dependent reaction via a pantoyl-adenylate intermediate. This Aeromonas salmonicida (strain A449) protein is Pantothenate synthetase.